A 345-amino-acid polypeptide reads, in one-letter code: Dimethyladenosine transferase 1, mitochondrial (345 aa).

A mitochondrion-targeting transit peptide spans 1 to 27 (MAAPGKLSTCRLPPLPTIREIIKLFRL). S-adenosyl-L-methionine contacts are provided by L38, G63, E85, K86, D111, V112, and N141.

The protein belongs to the class I-like SAM-binding methyltransferase superfamily. rRNA adenine N(6)-methyltransferase family. KsgA subfamily. Interacts with mitochondrial RNA polymerase POLRMT. Interacts with TFAM. Bound to the maturing mtSSU until the late stages of assembly.

Its subcellular location is the mitochondrion. The catalysed reaction is adenosine(N)/adenosine(N+1) in rRNA + 4 S-adenosyl-L-methionine = N(6)-dimethyladenosine(N)/N(6)-dimethyladenosine(N+1) in rRNA + 4 S-adenosyl-L-homocysteine + 4 H(+). Its function is as follows. Mitochondrial methyltransferase which uses S-adenosyl methionine to dimethylate two highly conserved adjacent adenosine residues (A1583 and A1584) within the loop of helix 45 at the 3-prime end of 12S rRNA, thereby regulating the assembly or stability of the small subunit of the mitochondrial ribosome. Also required for basal transcription of mitochondrial DNA, probably via its interaction with POLRMT and TFAM. Stimulates transcription independently of the methyltransferase activity. This chain is Dimethyladenosine transferase 1, mitochondrial (TFB1M), found in Macaca fascicularis (Crab-eating macaque).